Consider the following 1235-residue polypeptide: Chitin synthase 4 (1235 aa).

Positions 1-11 (MSLPRRPGPSP) are enriched in pro residues. The interval 1–203 (MSLPRRPGPS…ASKGKREKSG (203 aa)) is disordered. At 1–212 (MSLPRRPGPS…GGLPTPSFWN (212 aa)) the chain is on the cytoplasmic side. The span at 19-28 (YRQSGSRRSR) shows a compositional bias: basic residues. Residues 46–59 (PSQQQRVPSISSFP) are compositionally biased toward polar residues. Residues 94–107 (IRPERNRIGKDHPN) show a composition bias toward basic and acidic residues. The span at 116-125 (NMNTLPSSTG) shows a compositional bias: polar residues. A compositionally biased stretch (basic and acidic residues) spans 169–187 (ETEKSGDERRRRRKSDTTK). A compositionally biased stretch (basic residues) spans 188–199 (HGKIVKASKGKR). Residues 213–233 (IYCGFVTFWCPGFVLKCFGMP) traverse the membrane as a helical segment. The Extracellular portion of the chain corresponds to 234 to 244 (EMAQQRAWREK). The chain crosses the membrane as a helical span at residues 245–265 (MGLISIILLIMGFVGFITFGF). At 266-514 (TQVVCGKPPL…ASKVVLYVSL (249 aa)) the chain is on the cytoplasmic side. The chain crosses the membrane as a helical span at residues 515 to 535 (VLILAVVLARFVLALIFQWFI). The Extracellular segment spans residues 536-1065 (SKTYAAAKTS…SMQFIVGIEL (530 aa)). A disordered region spans residues 545-592 (SQTSDQRKRNRQIEDWTEDIYRAPPRLPGEVGSSVAGSSDRQSKRSSA). Positions 549-558 (DQRKRNRQIE) are enriched in basic and acidic residues. Residue N639 is glycosylated (N-linked (GlcNAc...) asparagine). Residues 645-670 (FLKSDAYGSSSSPADGPGPAGFIHEA) are disordered. The segment covering 648–665 (SDAYGSSSSPADGPGPAG) has biased composition (low complexity). N1034 is a glycosylation site (N-linked (GlcNAc...) asparagine). A helical membrane pass occupies residues 1066 to 1086 (IGTLVLPAAIAFTFYVVIISI). The Cytoplasmic segment spans residues 1087 to 1092 (INSPPQ). A helical membrane pass occupies residues 1093–1113 (IIPLVLLGLILGLPAILVVVT). Residues 1114 to 1116 (AHS) are Extracellular-facing. The chain crosses the membrane as a helical span at residues 1117-1137 (WSYIIWMFIYLLSLPVWNFVL). The Cytoplasmic portion of the chain corresponds to 1138-1235 (PTYAFWKFDD…RHFDDYFSDA (98 aa)). The interval 1201–1235 (RDNVISGVGGSNGWGSSQPRGHEQGRHFDDYFSDA) is disordered. Residues 1220–1235 (RGHEQGRHFDDYFSDA) are compositionally biased toward basic and acidic residues.

Belongs to the chitin synthase family. Class IV subfamily.

Its subcellular location is the cell membrane. The catalysed reaction is [(1-&gt;4)-N-acetyl-beta-D-glucosaminyl](n) + UDP-N-acetyl-alpha-D-glucosamine = [(1-&gt;4)-N-acetyl-beta-D-glucosaminyl](n+1) + UDP + H(+). In terms of biological role, polymerizes chitin, a structural polymer of the cell wall and septum, by transferring the sugar moiety of UDP-GlcNAc to the non-reducing end of the growing chitin polymer. This is Chitin synthase 4 (chs-4) from Neurospora crassa (strain ATCC 24698 / 74-OR23-1A / CBS 708.71 / DSM 1257 / FGSC 987).